The chain runs to 170 residues: uncharacterized protein (170 aa).

Residues 96 to 116 (FSAISIGSFPIVLFLSLFFFD) traverse the membrane as a helical segment.

The protein localises to the membrane. This is an uncharacterized protein from Borreliella burgdorferi (strain ATCC 35210 / DSM 4680 / CIP 102532 / B31) (Borrelia burgdorferi).